Reading from the N-terminus, the 518-residue chain is Putative N-acetylmuramoyl-L-alanine amidase YrvJ (518 aa).

The N-terminal stretch at 1 to 27 (MNKKYFVLIVCIIFTSALFPTFSSVTA) is a signal peptide. SH3b domains lie at 29–91 (QGEA…ITKE), 102–164 (SDTV…TSGG), 181–243 (STTG…LTSS), and 258–320 (AKKA…VQTS). 2 disordered regions span residues 94–121 (ASTS…PGTS) and 160–186 (VTSG…TGTV). Low complexity-rich tracts occupy residues 95–108 (STSS…VTST) and 160–169 (VTSGGSSSAS). The tract at residues 322–352 (SAEEAGEPPVSDSPSGNGSLNNKTIIVDPGH) is disordered. Residues 333–345 (DSPSGNGSLNNKT) show a composition bias toward polar residues. The region spanning 346 to 514 (IIVDPGHGGK…VTDGIESGLE (169 aa)) is the MurNAc-LAA domain.

Belongs to the N-acetylmuramoyl-L-alanine amidase 3 family.

The protein localises to the secreted. Its subcellular location is the cell wall. It carries out the reaction Hydrolyzes the link between N-acetylmuramoyl residues and L-amino acid residues in certain cell-wall glycopeptides.. In terms of biological role, probably involved in cell-wall metabolism. The sequence is that of Putative N-acetylmuramoyl-L-alanine amidase YrvJ (yrvJ) from Bacillus subtilis (strain 168).